Here is a 341-residue protein sequence, read N- to C-terminus: tRNA N6-adenosine threonylcarbamoyltransferase (341 aa).

Fe cation is bound by residues His111 and His115. Residues 133–137 (VVSGG), Asp166, Gly179, Asp183, and Asn271 each bind substrate. A Fe cation-binding site is contributed by Asp299.

It belongs to the KAE1 / TsaD family. Fe(2+) serves as cofactor.

It localises to the cytoplasm. It catalyses the reaction L-threonylcarbamoyladenylate + adenosine(37) in tRNA = N(6)-L-threonylcarbamoyladenosine(37) in tRNA + AMP + H(+). Required for the formation of a threonylcarbamoyl group on adenosine at position 37 (t(6)A37) in tRNAs that read codons beginning with adenine. Is involved in the transfer of the threonylcarbamoyl moiety of threonylcarbamoyl-AMP (TC-AMP) to the N6 group of A37, together with TsaE and TsaB. TsaD likely plays a direct catalytic role in this reaction. This chain is tRNA N6-adenosine threonylcarbamoyltransferase, found in Fusobacterium nucleatum subsp. nucleatum (strain ATCC 25586 / DSM 15643 / BCRC 10681 / CIP 101130 / JCM 8532 / KCTC 2640 / LMG 13131 / VPI 4355).